The sequence spans 369 residues: MIAILLAVAFGITFTLFTTPFFIRLFRKIGWGQFIRLDGPRQHAIKRGTPTMGGLVIVVASIISYFLANFFLGLSVEPSGLLVIFMFVGMSLVGFLDDILKVRKQHSGGLGPFYKVVLQSFIAVPFALLTFLVKDARGIPHSSMSISFARDTGINFSALFSLGIIGVFSAWVLYLLWINLIAVSSVNAVNITDGLDGLAAGAMIFTMLAYVVIGFWQSGQNCARKSLPLENISKCYSVNGPLDMSILAAAILGSLLGFLWWNTNPSKIMMGDTGALALGGAAAALSILTHTQLLFLVLGGLFVIEAGSVILQIAFYKKYRRRIFLMSPLHHHFELKGWAEITVVVRFWIIAGLFTALGIGLFYADWLYS.

Transmembrane regions (helical) follow at residues 2–22, 54–74, 80–100, 113–133, 158–178, 195–215, 241–261, 268–288, 293–313, and 347–367; these read IAILLAVAFGITFTLFTTPFF, GLVIVVASIISYFLANFFLGL, GLLVIFMFVGMSLVGFLDDIL, FYKVVLQSFIAVPFALLTFLV, ALFSLGIIGVFSAWVLYLLWI, LDGLAAGAMIFTMLAYVVIGF, PLDMSILAAAILGSLLGFLWW, IMMGDTGALALGGAAAALSIL, LLFLVLGGLFVIEAGSVILQI, and FWIIAGLFTALGIGLFYADWL.

This sequence belongs to the glycosyltransferase 4 family. MraY subfamily. It depends on Mg(2+) as a cofactor.

It is found in the cell membrane. It carries out the reaction UDP-N-acetyl-alpha-D-muramoyl-L-alanyl-gamma-D-glutamyl-meso-2,6-diaminopimeloyl-D-alanyl-D-alanine + di-trans,octa-cis-undecaprenyl phosphate = di-trans,octa-cis-undecaprenyl diphospho-N-acetyl-alpha-D-muramoyl-L-alanyl-D-glutamyl-meso-2,6-diaminopimeloyl-D-alanyl-D-alanine + UMP. It functions in the pathway cell wall biogenesis; peptidoglycan biosynthesis. Its function is as follows. Catalyzes the initial step of the lipid cycle reactions in the biosynthesis of the cell wall peptidoglycan: transfers peptidoglycan precursor phospho-MurNAc-pentapeptide from UDP-MurNAc-pentapeptide onto the lipid carrier undecaprenyl phosphate, yielding undecaprenyl-pyrophosphoryl-MurNAc-pentapeptide, known as lipid I. The chain is Phospho-N-acetylmuramoyl-pentapeptide-transferase from Tropheryma whipplei (strain TW08/27) (Whipple's bacillus).